The sequence spans 1580 residues: MGRRTYLSRSSTISYPSRIEGWLDVCETEGELTRLIKTLPWGPLYCVLQQDDQTFTAYCSEEISLGDVCYEDIPRVRLDRVRRPAKALWDGPPTLVEENEDSDSCVGGSGGMSGINDIVLNTTLYSELGEYKSKTLPRIHFDTALNDTSLNEDTSYEKACRRGSAPTTPILGSKQHQTEHNATSRFTNFFSKKSNPLKRTKSVTKLERTKRGSGGLRGSRSHESLLSSHAVMSTIDLSCTGAVGVAPVHQSVLGRRHCFQVRGGPRGERYYSCGSRQERDLWIYSLRKSIAPNAEHTRRTDNSLKMWVYEAKNLPPKKRYFCELQLDKTLYGRTSVKLQTDLLFWGEHFDFPDIPEINVITVNVFREVDKKKKRDKYQFVGSVKIPVHDVTSRLPCEQWYPILSDKAGDSLGRTSGGGGSGSKDKEQLPTLRIKCRFQSTDILPINVYGNFLTYLKENYKRVCETLEPVIGVKAKEDIGQALVLLMHAQGLAGAFLTDVVALDLLRVGDQRLTFRGNSLATKSMEAFLKLTGEQYLQDTLSAPINELIQSERDCEVDPTKTSGSSAGSLQRQQAALRGAVRGAWQCIFESHKHFPAQLRNCFATFRERLQQLGRQDMADNLISASIFLRFLCPAILSPSLFNITSELPSARATRNLTLVAKTLQTLANFTRFQGKENFMEFLNDFLEQEAARMQQFLEIISTRPEHPAPDSILDWAGYIDQGKQLSILHSLLSESLAKLPEARQHELDPLQHILDEISRAKEHGMGTALPGGYLPATSSTHSIASENQENRNPGSSGSHAGSNSEQLLPQQSQLAQPQHAIVSKPLSAERGIMRGVLTPNSLEKNIFRYNDPTVNGLLQQQQQQQQQQQQQQQQHQQLQQHGHQQQPHHQHPLQMLSNSQTSIAGNQYMSSPGGLQHAQSQTSMASSSLNGSSSNLLHGHQQHAHHPQQLHPHHCPPAPQTSASSTMERMDRMNYPYMSHNGNDYETSTPSSTRSRTLPRNGNPNANGNVGSSNNNQSGSYDDMHGEFQIQISGFDTSSAFVCKSPTPMMKSSLGPAGAGRSHHKLNLGIPDHSGGYVRGNNLNPNSNMPKNLEDLDDLFKYAEEHDVAEPANHHNHNQGQQNHQGHLKPAAVPGKEQLSAKSSHCSSGYQSISTNPSPSQSSSPVESQLKAAMGSHNAPLAFKNPSYQLQPQTGSSRSSAQSNTHQQQQQQQQQQFGSRLKPIGGGLVAARAAFLNSGGALEAATLTPSSSDEQLSADNYFSYAAAAAAGAGIATKLEAQRSLSGGSSSSTSASASTSNLGKSGGSSAYGRLNGPLKREDVYGSGYGGSSGNVGYGLSTSSAAGHHQHPHQQQQNPMQQQQQRERDQEHKQYAGSVAGSVGSATSAAQRRLSLDSARTLSDSSTDTEGHCNQLQEGKRRRQLRSSGGSGGGGAGSEQGLGKSYDQNGEIQLLQQTLDTLCHTLDRDEAELRDSSDELFGLQRPAGSNGSNNLSLQSESTMRSIIDRLITMEEELRREQLKMSLALSHKQRVIEEQGQQIAALDAANSRLLSALTALRQRYETQQQQQQHQAPPKTQKPQ.

S164 carries the post-translational modification Phosphoserine. T167 bears the Phosphothreonine mark. Residues 197–223 (LKRTKSVTKLERTKRGSGGLRGSRSHE) are disordered. S221 and S224 each carry phosphoserine. Residues 233-291 (STIDLSCTGAVGVAPVHQSVLGRRHCFQVRGGPRGERYYSCGSRQERDLWIYSLRKSIA) form the PH domain. Positions 282-400 (WIYSLRKSIA…TSRLPCEQWY (119 aa)) constitute a C2 domain. Residues 490-700 (GLAGAFLTDV…ARMQQFLEII (211 aa)) form the Ras-GAP domain. Disordered regions lie at residues 764–819 (GMGT…QPQH), 857–892 (LLQQQQQQQQQQQQQQQQHQQLQQHGHQQQPHHQHP), 904–1023 (AGNQ…SYDD), 1112–1218 (ANHH…QQFG), 1284–1313 (LSGGSSSSTSASASTSNLGKSGGSSAYGRL), 1334–1443 (VGYG…LGKS), and 1561–1580 (YETQQQQQQHQAPPKTQKPQ). Residues 776–805 (ATSSTHSIASENQENRNPGSSGSHAGSNSE) are compositionally biased toward polar residues. Composition is skewed to low complexity over residues 806–818 (QLLPQQSQLAQPQ), 857–885 (LLQQQQQQQQQQQQQQQQHQQLQQHGHQQ), and 926–939 (SSSLNGSSSNLLHG). Positions 940 to 954 (HQQHAHHPQQLHPHH) are enriched in basic residues. Low complexity predominate over residues 987–1020 (TSTPSSTRSRTLPRNGNPNANGNVGSSNNNQSGS). A compositionally biased stretch (polar residues) spans 1140–1150 (SAKSSHCSSGY). Residues 1151–1169 (QSISTNPSPSQSSSPVESQ) are compositionally biased toward low complexity. Phosphoserine occurs at positions 1158 and 1164. Residues 1186-1206 (PSYQLQPQTGSSRSSAQSNTH) show a composition bias toward polar residues. 3 stretches are compositionally biased toward low complexity: residues 1207-1216 (QQQQQQQQQQ), 1285-1299 (SGGSSSSTSASASTS), and 1351-1362 (HQQQQNPMQQQQ). Over residues 1363–1372 (QRERDQEHKQ) the composition is skewed to basic and acidic residues. The span at 1374–1388 (AGSVAGSVGSATSAA) shows a compositional bias: low complexity. The span at 1396-1415 (SARTLSDSSTDTEGHCNQLQ) shows a compositional bias: polar residues. 2 positions are modified to phosphoserine: S1401 and S1403. Residues 1427–1438 (GGSGGGGAGSEQ) show a composition bias toward gly residues. A compositionally biased stretch (low complexity) spans 1563-1580 (TQQQQQQHQAPPKTQKPQ).

It is found in the cytoplasm. It localises to the cell membrane. The protein resides in the apical cell membrane. In terms of biological role, GTPase-activating protein, which acts as a negative regulator for some members of the Ras family. Probably decreases their signaling activity by stimulating their intrinsic GTPase activity, thereby lowering the levels of the GTP-bound active form. Functions with DE-cadherin (shg) to promote embryonic border cell (BC) migration and adhesion by regulating the distribution of actin protrusions in BCs. Promotes shg-mediated adhesion at the BC interfaces and likely maintains BC cluster adhesion during BC detachment from the follicular epithelium and subsequent BC migration. Also required for restricting the development of actin-rich protrusions to the front of migrating BC clusters thus ensuring unidirectional BC migration. Possibly functions by suppressing Rac1 signaling in non-leading BCs, thus limiting its activity to leading BCs where it initiates localized actin cytoskeleton remodeling to produce the polarized protrusions. The sequence is that of Ras GTPase-activating protein raskol from Drosophila melanogaster (Fruit fly).